Consider the following 155-residue polypeptide: Protein E6 (155 aa).

Zinc fingers lie at residues 33 to 69 (CVYC…CRVC) and 106 to 142 (CYRC…CLQC).

It belongs to the papillomaviridae E6 protein family. Forms homodimers. Interacts with ubiquitin-protein ligase UBE3A/E6-AP; this interaction stimulates UBE3A ubiquitin activity. Interacts with host TP53 and EP300; this interaction inhibits TP53 activity.

The protein localises to the host cytoplasm. Its subcellular location is the host nucleus. Its function is as follows. Plays a major role in the induction and maintenance of cellular transformation. E6 associates with host UBE3A/E6-AP ubiquitin-protein ligase and modulates its activity. Sequesters tumor suppressor TP53 in the host cytoplasm and modulates its activity by interacting with host EP300 that results in the reduction of TP53 acetylation and activation. In turn, apoptosis induced by DNA damage is inhibited. E6 also protects host keratinocytes from apoptosis by mediating the degradation of host BAK1. May also inhibit host immune response. This chain is Protein E6, found in Homo sapiens (Human).